The sequence spans 507 residues: Bifunctional purine biosynthesis protein PurH (507 aa).

In terms of domain architecture, MGS-like spans 1–144; it reads MKRALLSVSD…KNSDSVWAVV (144 aa).

The protein belongs to the PurH family.

The catalysed reaction is (6R)-10-formyltetrahydrofolate + 5-amino-1-(5-phospho-beta-D-ribosyl)imidazole-4-carboxamide = 5-formamido-1-(5-phospho-D-ribosyl)imidazole-4-carboxamide + (6S)-5,6,7,8-tetrahydrofolate. It catalyses the reaction IMP + H2O = 5-formamido-1-(5-phospho-D-ribosyl)imidazole-4-carboxamide. It participates in purine metabolism; IMP biosynthesis via de novo pathway; 5-formamido-1-(5-phospho-D-ribosyl)imidazole-4-carboxamide from 5-amino-1-(5-phospho-D-ribosyl)imidazole-4-carboxamide (10-formyl THF route): step 1/1. Its pathway is purine metabolism; IMP biosynthesis via de novo pathway; IMP from 5-formamido-1-(5-phospho-D-ribosyl)imidazole-4-carboxamide: step 1/1. The chain is Bifunctional purine biosynthesis protein PurH from Lacticaseibacillus casei (strain BL23) (Lactobacillus casei).